We begin with the raw amino-acid sequence, 1141 residues long: DNA-directed RNA polymerase subunit beta (1141 aa).

This sequence belongs to the RNA polymerase beta chain family. As to quaternary structure, the RNAP catalytic core consists of 2 alpha, 1 beta, 1 beta' and 1 omega subunit. When a sigma factor is associated with the core the holoenzyme is formed, which can initiate transcription.

It catalyses the reaction RNA(n) + a ribonucleoside 5'-triphosphate = RNA(n+1) + diphosphate. Functionally, DNA-dependent RNA polymerase catalyzes the transcription of DNA into RNA using the four ribonucleoside triphosphates as substrates. The chain is DNA-directed RNA polymerase subunit beta from Frankia casuarinae (strain DSM 45818 / CECT 9043 / HFP020203 / CcI3).